Consider the following 362-residue polypeptide: tRNA/tmRNA (uracil-C(5))-methyltransferase (362 aa).

Residues Q186, Y214, N219, E235, and D295 each contribute to the S-adenosyl-L-methionine site. Residue C320 is the Nucleophile of the active site. E354 (proton acceptor) is an active-site residue.

Belongs to the class I-like SAM-binding methyltransferase superfamily. RNA M5U methyltransferase family. TrmA subfamily.

It carries out the reaction uridine(54) in tRNA + S-adenosyl-L-methionine = 5-methyluridine(54) in tRNA + S-adenosyl-L-homocysteine + H(+). The enzyme catalyses uridine(341) in tmRNA + S-adenosyl-L-methionine = 5-methyluridine(341) in tmRNA + S-adenosyl-L-homocysteine + H(+). Its function is as follows. Dual-specificity methyltransferase that catalyzes the formation of 5-methyluridine at position 54 (m5U54) in all tRNAs, and that of position 341 (m5U341) in tmRNA (transfer-mRNA). In Stutzerimonas stutzeri (strain A1501) (Pseudomonas stutzeri), this protein is tRNA/tmRNA (uracil-C(5))-methyltransferase.